Here is a 437-residue protein sequence, read N- to C-terminus: Serine hydroxymethyltransferase (437 aa).

(6S)-5,6,7,8-tetrahydrofolate contacts are provided by residues L130 and 134-136 (GHL). K239 carries the post-translational modification N6-(pyridoxal phosphate)lysine. Position 363-365 (363-365 (TPF)) interacts with (6S)-5,6,7,8-tetrahydrofolate.

It belongs to the SHMT family. Homodimer. The cofactor is pyridoxal 5'-phosphate.

The protein resides in the cytoplasm. It carries out the reaction (6R)-5,10-methylene-5,6,7,8-tetrahydrofolate + glycine + H2O = (6S)-5,6,7,8-tetrahydrofolate + L-serine. It functions in the pathway one-carbon metabolism; tetrahydrofolate interconversion. The protein operates within amino-acid biosynthesis; glycine biosynthesis; glycine from L-serine: step 1/1. Catalyzes the reversible interconversion of serine and glycine with tetrahydrofolate (THF) serving as the one-carbon carrier. This reaction serves as the major source of one-carbon groups required for the biosynthesis of purines, thymidylate, methionine, and other important biomolecules. Also exhibits THF-independent aldolase activity toward beta-hydroxyamino acids, producing glycine and aldehydes, via a retro-aldol mechanism. This Bartonella henselae (strain ATCC 49882 / DSM 28221 / CCUG 30454 / Houston 1) (Rochalimaea henselae) protein is Serine hydroxymethyltransferase.